A 295-amino-acid polypeptide reads, in one-letter code: Glycine N-acyltransferase-like protein Keg1 (295 aa).

An N6-acetyllysine; alternate modification is found at lysine 41. An N6-succinyllysine; alternate modification is found at lysine 41. Residue lysine 43 is modified to N6-acetyllysine. Lysine 48 bears the N6-acetyllysine; alternate mark. The residue at position 48 (lysine 48) is an N6-succinyllysine; alternate. Residues lysine 80 and lysine 83 each carry the N6-acetyllysine modification. An N6-acetyllysine; alternate mark is found at lysine 124, lysine 128, and lysine 140. 3 positions are modified to N6-succinyllysine; alternate: lysine 124, lysine 128, and lysine 140. An N6-acetyllysine modification is found at lysine 150. Lysine 255 bears the N6-acetyllysine; alternate mark. Lysine 255 bears the N6-succinyllysine; alternate mark.

This sequence belongs to the glycine N-acyltransferase family. Binds to microtubules. In terms of tissue distribution, specifically expressed in kidney and liver. Up-regulated in the regenerating liver as well as in hepatocellular carcinoma.

The protein localises to the cytoplasm. It is found in the cytoskeleton. The protein resides in the microtubule organizing center. Its subcellular location is the centrosome. It catalyses the reaction an acyl-CoA + glycine = an N-acylglycine + CoA + H(+). Functionally, acyltransferase which transfers the acyl group to the N-terminus of glycine. Can conjugate a multitude of substrates to form a variety of N-acylglycines. In Rattus norvegicus (Rat), this protein is Glycine N-acyltransferase-like protein Keg1 (Keg1).